A 697-amino-acid polypeptide reads, in one-letter code: uncharacterized protein (697 aa).

The next 5 membrane-spanning stretches (helical) occupy residues 45–65 (LCAVTAIISVVVPFAAGLALL), 86–106 (TVAAGMIAFLIAGLGGFMGVV), 128–148 (VVVSSLIGGFVFGAAMVGMLA), 198–218 (VLLGYFNIGIMIVSLIGWWAL), and 280–300 (HLAIIGANGSGKTTLMLILAG). ABC transporter domains lie at 251 to 473 (VRLD…QPQH) and 477 to 696 (LELV…AGGM). Residues 285–292 (GANGSGKT) and 514–521 (GGNGSGKS) contribute to the ATP site. A helical membrane pass occupies residues 522 to 542 (TLAWIMAGLTIPTTGACLLDG).

The protein belongs to the ABC transporter superfamily.

The protein localises to the cell membrane. This is an uncharacterized protein from Mycobacterium tuberculosis (strain CDC 1551 / Oshkosh).